A 112-amino-acid chain; its full sequence is Large ribosomal subunit protein bL20c (112 aa).

It belongs to the bacterial ribosomal protein bL20 family.

It is found in the plastid. It localises to the chloroplast. In terms of biological role, binds directly to 23S ribosomal RNA and is necessary for the in vitro assembly process of the 50S ribosomal subunit. It is not involved in the protein synthesizing functions of that subunit. In Chlamydomonas reinhardtii (Chlamydomonas smithii), this protein is Large ribosomal subunit protein bL20c (rpl20).